The chain runs to 392 residues: Ceramide phosphoethanolamine synthase (392 aa).

Topologically, residues M1–K10 are lumenal. A helical membrane pass occupies residues I11–Y31. The Cytoplasmic portion of the chain corresponds to L32–R140. The span at S59–T82 shows a compositional bias: low complexity. Residues S59–Q91 are disordered. The chain crosses the membrane as a helical span at residues S141–G161. Residues K162–Y212 are Lumenal-facing. A helical membrane pass occupies residues V213 to L233. Topologically, residues K234–K271 are cytoplasmic. A helical transmembrane segment spans residues N272–N288. The Lumenal segment spans residues R289 to W319. Residues F320–L340 traverse the membrane as a helical segment. Residues L341–R356 lie on the Cytoplasmic side of the membrane. A helical transmembrane segment spans residues Y357–A377. Residues Q378–L392 are Lumenal-facing.

This sequence belongs to the CDP-alcohol phosphatidyltransferase class-I family. Mn(2+) serves as cofactor.

It is found in the membrane. Its subcellular location is the golgi apparatus membrane. The protein localises to the cell membrane. The enzyme catalyses CDP-ethanolamine + an N-acylsphing-4-enine = an N-acylsphing-4-enine 1-phosphoethanolamine + CMP + H(+). It catalyses the reaction CDP-ethanolamine + an N-acyl-sphingoid base = an N-acyl-sphingoid 1-phosphoethanolamine + CMP + H(+). Its function is as follows. Catalyzes the biosynthesis of ceramide phosphoethanolamine (CPE) through the transfer of a phosphatidyl head group from cytidine 5'-diphosphate (CDP)-ethanolamine on to the primary hydroxyl of ceramide. In Drosophila melanogaster (Fruit fly), this protein is Ceramide phosphoethanolamine synthase.